A 297-amino-acid chain; its full sequence is N-acetylneuraminate lyase (297 aa).

Aceneuramate-binding residues include Ser47 and Thr48. The active-site Proton donor is Tyr137. The active-site Schiff-base intermediate with substrate is Lys165. Aceneuramate is bound by residues Thr167, Gly189, Asp191, Glu192, and Ser208.

The protein belongs to the DapA family. NanA subfamily. As to quaternary structure, homotetramer.

It is found in the cytoplasm. The catalysed reaction is aceneuramate = aldehydo-N-acetyl-D-mannosamine + pyruvate. It functions in the pathway amino-sugar metabolism; N-acetylneuraminate degradation; D-fructose 6-phosphate from N-acetylneuraminate: step 1/5. In terms of biological role, catalyzes the reversible aldol cleavage of N-acetylneuraminic acid (sialic acid; Neu5Ac) to form pyruvate and N-acetylmannosamine (ManNAc) via a Schiff base intermediate. This Salmonella choleraesuis (strain SC-B67) protein is N-acetylneuraminate lyase.